Here is a 369-residue protein sequence, read N- to C-terminus: Uroporphyrinogen decarboxylase (369 aa).

Substrate-binding positions include 28–32 (RQAGR), D78, Y154, S209, and H339.

The protein belongs to the uroporphyrinogen decarboxylase family. Homodimer.

It is found in the cytoplasm. The enzyme catalyses uroporphyrinogen III + 4 H(+) = coproporphyrinogen III + 4 CO2. The protein operates within porphyrin-containing compound metabolism; protoporphyrin-IX biosynthesis; coproporphyrinogen-III from 5-aminolevulinate: step 4/4. Its function is as follows. Catalyzes the decarboxylation of four acetate groups of uroporphyrinogen-III to yield coproporphyrinogen-III. This chain is Uroporphyrinogen decarboxylase, found in Polaromonas naphthalenivorans (strain CJ2).